The following is an 822-amino-acid chain: IQ and AAA domain-containing protein 1-like (822 aa).

Positions 206 to 235 constitute an IQ domain; that stretch reads QDQGAIVIQKVWKGYLQRKRIEQDRRMEME. A compositionally biased stretch (basic and acidic residues) spans 338 to 363; the sequence is RQELEAQAQENKKKEQEKNKDKVKEK. 2 disordered regions span residues 338–378 and 457–484; these read RQEL…KAKK and REET…KDLT. Positions 464–479 are enriched in basic residues; sequence KSPKKKGGKKSGKKKK. ATP is bound at residue 569–576; that stretch reads GPSGMGKK.

Belongs to the AAA ATPase family.

This is IQ and AAA domain-containing protein 1-like (Iqca1l) from Rattus norvegicus (Rat).